Reading from the N-terminus, the 524-residue chain is REH2-associated factor 1 (524 aa).

A mitochondrion-targeting transit peptide spans 1–22 (MRRWLVASMAPQLHQLLQPVRR). The C2H2-type 1; atypical zinc-finger motif lies at 48-70 (ASCPACSRVVHMCDMLTHLITAH). Residues 121–147 (YMCNWCDRRSDVYATRDKFLKHVADVH) form a C2H2-type 2; atypical zinc finger. The C2H2-type 4 zinc-finger motif lies at 226–249 (FPCELCNRTFNSEIDLLQHLETRH). Residues 286-312 (VICDLCVSSSKVYKMPSALFSHIRFKH) form a C2H2-type 3; atypical zinc finger. 4 consecutive C2H2-type zinc fingers follow at residues 334–357 (FVCTVCQKAFASAAALDGHFNSKH), 376–399 (WWCHDCEKGFSSAKGLHGHMQNKH), 406–429 (HPCPACKRVFADIYSLEEHLSLQH), and 443–465 (VKCSTCERFFLSHEDLHRHAVKH). Positions 463–524 (VKHHKKDPRA…KTTEVSEVTS (62 aa)) are disordered. The segment covering 479 to 500 (APTSASHVAASTSAAVPSEVEA) has biased composition (low complexity).

In terms of assembly, component of the REH2-associated complex (REH2C) composed of helicase REH2, associated factors H2F1 and H2F2, and mRNAs at various editing stages; the formation of the complex is RNA-independent. Within the complex, interacts with REH2; the interaction is direct. Interacts with various editing complexes including the RNA editing core (RECC) complex, the gRNA-binding (GRBC) complex (also known as the MRB1 complex) and the RNA editing mediator (REMC) complex.

The protein localises to the mitochondrion. Plays an important role in mitochondrial mRNA editing by promoting the assembly of the mRNA editosome. Facilitates the recruitment of mRNA to the REH2C complex and promotes the interaction between various editing complexes including REH2C, GRBC, REMC and RECC complexes. The sequence is that of REH2-associated factor 1 from Trypanosoma brucei brucei (strain 927/4 GUTat10.1).